Consider the following 136-residue polypeptide: uncharacterized protein (136 aa).

Transmembrane regions (helical) follow at residues 36–56 and 63–83; these read FLLT…IYLI and FAFA…LFLS.

The protein localises to the cell membrane. This is an uncharacterized protein from Mycoplasma pneumoniae (strain ATCC 29342 / M129 / Subtype 1) (Mycoplasmoides pneumoniae).